The primary structure comprises 391 residues: Transaldolase (391 aa).

The tract at residues 1-329 (MGKNLLEQLR…RLKVLDGQEH (329 aa)) is transaldolase. Lys136 serves as the catalytic Schiff-base intermediate with substrate. EF-hand domains are found at residues 329 to 364 (HIKH…FDAL) and 365 to 387 (DRDH…AFRL). Ca(2+)-binding residues include Asp342, Asp344, Asp346, Glu353, Asp365, Asp367, Asp369, Lys371, and Glu376.

This sequence belongs to the transaldolase family. Type 1 subfamily.

The protein localises to the cytoplasm. It catalyses the reaction D-sedoheptulose 7-phosphate + D-glyceraldehyde 3-phosphate = D-erythrose 4-phosphate + beta-D-fructose 6-phosphate. The protein operates within carbohydrate degradation; pentose phosphate pathway; D-glyceraldehyde 3-phosphate and beta-D-fructose 6-phosphate from D-ribose 5-phosphate and D-xylulose 5-phosphate (non-oxidative stage): step 2/3. In terms of biological role, transaldolase is important for the balance of metabolites in the pentose-phosphate pathway. This Synechocystis sp. (strain ATCC 27184 / PCC 6803 / Kazusa) protein is Transaldolase.